Reading from the N-terminus, the 904-residue chain is Translation initiation factor IF-2 (904 aa).

2 disordered regions span residues 134–248 (RQRN…GSHV) and 267–315 (HLSA…FERP). Residues 136–177 (RNLDEQQRLAESDRVRDEEIQRKRDEEQAAKDRAEAERKAAE) are compositionally biased toward basic and acidic residues. Composition is skewed to low complexity over residues 178 to 230 (EAAA…STPA) and 285 to 303 (GRPG…RGSN). One can recognise a tr-type G domain in the interval 403–572 (TRPPVVTIMG…SLQAEVLELK (170 aa)). The segment at 412 to 419 (GHVDHGKT) is G1. 412–419 (GHVDHGKT) lines the GTP pocket. The tract at residues 437-441 (GITQH) is G2. The interval 458–461 (DTPG) is G3. Residues 458–462 (DTPGH) and 512–515 (NKID) each bind GTP. The tract at residues 512-515 (NKID) is G4. Positions 548–550 (SAK) are G5.

Belongs to the TRAFAC class translation factor GTPase superfamily. Classic translation factor GTPase family. IF-2 subfamily.

The protein localises to the cytoplasm. In terms of biological role, one of the essential components for the initiation of protein synthesis. Protects formylmethionyl-tRNA from spontaneous hydrolysis and promotes its binding to the 30S ribosomal subunits. Also involved in the hydrolysis of GTP during the formation of the 70S ribosomal complex. The polypeptide is Translation initiation factor IF-2 (Xanthomonas oryzae pv. oryzae (strain PXO99A)).